We begin with the raw amino-acid sequence, 619 residues long: DNA polymerase II small subunit (619 aa).

The disordered stretch occupies residues 78–122; that stretch reads EEAEKTVESQETRASELEEGGVSQVSSGELQELKEESPEISTTEE. Positions 79–93 are enriched in basic and acidic residues; it reads EAEKTVESQETRASE.

It belongs to the DNA polymerase delta/II small subunit family. Heterodimer of a large subunit and a small subunit.

It catalyses the reaction DNA(n) + a 2'-deoxyribonucleoside 5'-triphosphate = DNA(n+1) + diphosphate. The catalysed reaction is Exonucleolytic cleavage in the 3'- to 5'-direction to yield nucleoside 5'-phosphates.. Its function is as follows. Possesses two activities: a DNA synthesis (polymerase) and an exonucleolytic activity that degrades single-stranded DNA in the 3' to 5' direction. Has a template-primer preference which is characteristic of a replicative DNA polymerase. This chain is DNA polymerase II small subunit (polB), found in Pyrococcus abyssi (strain GE5 / Orsay).